We begin with the raw amino-acid sequence, 695 residues long: Follicle-stimulating hormone receptor (695 aa).

The N-terminal stretch at 1-17 (MALLLVALLAFLSLGSG) is a signal peptide. 2 disulfides stabilise this stretch: Cys-18-Cys-25 and Cys-23-Cys-32. The region spanning 18–46 (CHHRLCHCSNGVFLCQESKVTEIPSDLPR) is the LRRNT domain. Over 18–366 (CHHRLCHCSN…EDIMGDDILR (349 aa)) the chain is Extracellular. LRR repeat units lie at residues 49–72 (VELR…FGDL), 73–97 (EKIE…LPKL), 98–118 (HEIR…AFQN), 119–143 (LPNL…KIQS), 144–169 (LQKV…MGLS), 170–192 (FESM…AFNG), 193–216 (TQLD…VFQG), 217–240 (ASGP…GLEN), and 241–259 (LKKL…PSLE). N-linked (GlcNAc...) asparagine glycosylation is found at Asn-191 and Asn-199. 4 disulfides stabilise this stretch: Cys-275–Cys-346, Cys-276–Cys-292, Cys-276–Cys-356, and Cys-292–Cys-338. Residue Asn-293 is glycosylated (N-linked (GlcNAc...) asparagine). At Tyr-335 the chain carries Sulfotyrosine. A helical transmembrane segment spans residues 367–387 (VLIWFISILAITGNILVLVIL). Residues 388–398 (ITSQYKLTVPR) are Cytoplasmic-facing. The chain crosses the membrane as a helical span at residues 399-421 (FLMCNLAFADLCIGIYLLLIASV). Over 422 to 443 (DVHTKTEYHNYAIDWQTGAGCD) the chain is Extracellular. A disulfide bond links Cys-442 and Cys-517. The helical transmembrane segment at 444 to 465 (AAGFFTVFASELSVYTLTAITL) threads the bilayer. Residues 466–485 (ERWHTITHAMQLECKVQLRH) lie on the Cytoplasmic side of the membrane. A helical transmembrane segment spans residues 486–508 (AASIMLVGWIFAFAVALFPIFGI). Topologically, residues 509–528 (SSYMKVSICLPMDIDSPLSQ) are extracellular. Residues 529 to 550 (LYVMSLLVLNVLAFVVICGCYT) traverse the membrane as a helical segment. Residues 551 to 573 (HIYLTVRNPNITSSSSDTKIAKR) are Cytoplasmic-facing. Residues 574-597 (MAMLIFTDFLCMAPISFFAISASL) form a helical membrane-spanning segment. The Extracellular portion of the chain corresponds to 598-608 (KVPLITVSKSK). The helical transmembrane segment at 609-630 (ILLVLFYPINSCANPFLYAIFT) threads the bilayer. The Cytoplasmic segment spans residues 631–695 (KNFRRDFFIL…LIPLRHLAKN (65 aa)).

It belongs to the G-protein coupled receptor 1 family. FSH/LSH/TSH subfamily. As to quaternary structure, homotrimer. Functions as a homotrimer binding the FSH hormone heterodimer composed of CGA and FSHB. Interacts with ARRB2. Interacts with APPL2; interaction is independent of follicle stimulating hormone stimulation. N-glycosylated; indirectly required for FSH-binding, possibly via a conformational change that allows high affinity binding of hormone. In terms of processing, sulfated.

The protein resides in the cell membrane. Its function is as follows. G protein-coupled receptor for follitropin, the follicle-stimulating hormone. Through cAMP production activates the downstream PI3K-AKT and ERK1/ERK2 signaling pathways. The protein is Follicle-stimulating hormone receptor (FSHR) of Bos taurus (Bovine).